The chain runs to 1543 residues: DNA-directed RNA polymerase subunit beta' (1543 aa).

Zn(2+) contacts are provided by Cys-60, Cys-62, Cys-75, and Cys-78. Residues Asp-627, Asp-629, and Asp-631 each contribute to the Mg(2+) site. Cys-1017, Cys-1097, Cys-1104, and Cys-1107 together coordinate Zn(2+). Disordered stretches follow at residues Pro-1466–Arg-1490 and Ala-1522–Val-1543.

It belongs to the RNA polymerase beta' chain family. In terms of assembly, the RNAP catalytic core consists of 2 alpha, 1 beta, 1 beta' and 1 omega subunit. When a sigma factor is associated with the core the holoenzyme is formed, which can initiate transcription. Requires Mg(2+) as cofactor. The cofactor is Zn(2+).

The enzyme catalyses RNA(n) + a ribonucleoside 5'-triphosphate = RNA(n+1) + diphosphate. In terms of biological role, DNA-dependent RNA polymerase catalyzes the transcription of DNA into RNA using the four ribonucleoside triphosphates as substrates. This Herpetosiphon aurantiacus (strain ATCC 23779 / DSM 785 / 114-95) protein is DNA-directed RNA polymerase subunit beta'.